A 95-amino-acid polypeptide reads, in one-letter code: Co-chaperonin GroES (95 aa).

Belongs to the GroES chaperonin family. In terms of assembly, heptamer of 7 subunits arranged in a ring. Interacts with the chaperonin GroEL.

It is found in the cytoplasm. Together with the chaperonin GroEL, plays an essential role in assisting protein folding. The GroEL-GroES system forms a nano-cage that allows encapsulation of the non-native substrate proteins and provides a physical environment optimized to promote and accelerate protein folding. GroES binds to the apical surface of the GroEL ring, thereby capping the opening of the GroEL channel. This Chlorobium limicola (strain DSM 245 / NBRC 103803 / 6330) protein is Co-chaperonin GroES.